A 435-amino-acid polypeptide reads, in one-letter code: Tryptophan--tRNA ligase (435 aa).

ATP-binding positions include 10-12 (TTS) and 18-19 (GN). The 'HIGH' region motif lies at 11-19 (TSGTPHLGN). Asp-143 is an L-tryptophan binding site. ATP is bound by residues 155-157 (GRD), Leu-195, and 202-206 (KMSKS). A 'KMSKS' region motif is present at residues 202 to 206 (KMSKS).

The protein belongs to the class-I aminoacyl-tRNA synthetase family. In terms of assembly, homodimer.

The protein localises to the cytoplasm. The catalysed reaction is tRNA(Trp) + L-tryptophan + ATP = L-tryptophyl-tRNA(Trp) + AMP + diphosphate + H(+). Its function is as follows. Catalyzes the attachment of tryptophan to tRNA(Trp). This is Tryptophan--tRNA ligase from Xylella fastidiosa (strain Temecula1 / ATCC 700964).